Here is a 134-residue protein sequence, read N- to C-terminus: Small ribosomal subunit protein uS8 (134 aa).

Belongs to the universal ribosomal protein uS8 family. As to quaternary structure, part of the 30S ribosomal subunit. Contacts proteins S5 and S12.

In terms of biological role, one of the primary rRNA binding proteins, it binds directly to 16S rRNA central domain where it helps coordinate assembly of the platform of the 30S subunit. The chain is Small ribosomal subunit protein uS8 from Pseudothermotoga lettingae (strain ATCC BAA-301 / DSM 14385 / NBRC 107922 / TMO) (Thermotoga lettingae).